The following is a 478-amino-acid chain: Abscisate beta-glucosyltransferase (478 aa).

Residue histidine 20 is the Proton acceptor of the active site. Histidine 20 provides a ligand contact to an anthocyanidin. Residue aspartate 108 is the Charge relay of the active site. UDP-alpha-D-glucose-binding residues include alanine 340, glutamine 342, histidine 357, tryptophan 360, asparagine 361, serine 362, and glutamate 365. Position 380 (alanine 380) interacts with an anthocyanidin. Glutamate 381 and glutamine 382 together coordinate UDP-alpha-D-glucose.

Belongs to the UDP-glycosyltransferase family.

The catalysed reaction is 2-cis-(+)-abscisate + UDP-alpha-D-glucose = beta-D-glucopyranosyl cis-(+)-abscisate + UDP. Its function is as follows. Glucosyltransferase involved in the catabolism of abscisic acid (ABA). Adds a glucosyl group at the C-1 position of ABA; (S)-2-trans-abscisate is a better substrate than the natural (+)-S-abscisate or its enantiomer (-)-R-abscisate. No activity with (-)-phaseic acid (PA), methylated-ABA or with other hormones such as jasmonate, zeatin, auxin (IAA) or gibberellin A3 (GA3). The polypeptide is Abscisate beta-glucosyltransferase (AOG) (Phaseolus angularis (Azuki bean)).